The primary structure comprises 317 residues: Ribose-phosphate pyrophosphokinase A (317 aa).

Mg(2+) contacts are provided by D130, H132, and D145. Residues 212–227 (KDKVALIVDDMADTCG) form a binding of phosphoribosylpyrophosphate region.

Belongs to the ribose-phosphate pyrophosphokinase family. The cofactor is Mg(2+).

The enzyme catalyses D-ribose 5-phosphate + ATP = 5-phospho-alpha-D-ribose 1-diphosphate + AMP + H(+). The protein operates within metabolic intermediate biosynthesis; 5-phospho-alpha-D-ribose 1-diphosphate biosynthesis; 5-phospho-alpha-D-ribose 1-diphosphate from D-ribose 5-phosphate (route I): step 1/1. The chain is Ribose-phosphate pyrophosphokinase A (prsA) from Dictyostelium discoideum (Social amoeba).